Consider the following 1102-residue polypeptide: Voltage-gated delayed rectifier potassium channel KCNH8 (1102 aa).

Over 1 to 225 the chain is Cytoplasmic; that stretch reads MPVMKGLLAP…HFSTFKAGWD (225 aa). The PAS domain maps to 18–90; that stretch reads IATRFDGTHS…LQIEKSLEEK (73 aa). Positions 93-145 constitute a PAC domain; it reads FKGEIMFYKKNGAPFWCLLDIVPIKNEKGDVVLFLASFKDITDTKVKITSEDK. Over residues 142-151 the composition is skewed to basic and acidic residues; it reads SEDKKEDRTK. The disordered stretch occupies residues 142–162; sequence SEDKKEDRTKGRSRAGSHFDS. A helical membrane pass occupies residues 226 to 246; that stretch reads WLILLATFYVAVTVPYNVCFI. The Extracellular portion of the chain corresponds to 247 to 255; it reads GNEDLSTTR. The helical transmembrane segment at 256–276 threads the bilayer; sequence STTVSDIAVEILFIIDIILNF. Residues 277 to 298 are Cytoplasmic-facing; the sequence is RTTYVSKSGQVIFEARSICIHY. A helical membrane pass occupies residues 299–319; sequence VTTWFIIDLIAALPFDLLYAF. A glycan (N-linked (GlcNAc...) asparagine) is linked at asparagine 320. At 320–327 the chain is on the extracellular side; it reads NVTVVSLV. The helical; Voltage-sensor transmembrane segment at 328-348 threads the bilayer; sequence HLLKTVRLLRLLRLLQKLDRY. Over 349–357 the chain is Cytoplasmic; sequence SQHSTIVLT. A helical transmembrane segment spans residues 358–378; it reads LLMSMFALLAHWMACIWYVIG. Over 379 to 419 the chain is Extracellular; that stretch reads KMEREDNSLLKWEVGWLHELGKRLESPYYGNNTLGGPSIRS. N-linked (GlcNAc...) asparagine glycosylation occurs at asparagine 409. Residues 420 to 440 constitute an intramembrane region (pore-forming); the sequence is AYIAALYFTLSSLTSVGFGNV. Positions 434 to 439 match the Selectivity filter motif; the sequence is SVGFGN. Topologically, residues 441 to 448 are extracellular; that stretch reads SANTDAEK. The chain crosses the membrane as a helical span at residues 449–469; it reads IFSICTMLIGALMHALVFGNV. Residues 470–1102 are Cytoplasmic-facing; the sequence is TAIIQRMYSR…DVKDSKAINV (633 aa). The interval 551–668 is cNMP-binding domain; sequence LFECASRGCL…HKFVEDIQHD (118 aa). Positions 684–693 are enriched in polar residues; it reads RLSNKSTVSQ. 3 disordered regions span residues 684–743, 764–841, and 960–991; these read RLSN…KKTG, HSPI…PEPR, and LVGS…YSPS. Residues 710-723 are compositionally biased toward acidic residues; it reads VEDEEEEEVEEEET. Residues 724-737 are compositionally biased toward polar residues; sequence TSLSPIYTRGSSVS. A compositionally biased stretch (basic and acidic residues) spans 968–984; it reads TEAHEQNPADSELHHSP.

This sequence belongs to the potassium channel family. H (Eag) (TC 1.A.1.20) subfamily. Kv12.1/KCNH8 sub-subfamily. In terms of assembly, the potassium channel is probably composed of a homo- or heterotetrameric complex of pore-forming alpha subunits that can associate with modulating beta subunits.

Its subcellular location is the membrane. It catalyses the reaction K(+)(in) = K(+)(out). Its function is as follows. Pore-forming (alpha) subunit of a voltage-gated delayed rectifier potassium channel that mediates outward-rectifying potassium currents. Elicits a slowly activating, non-inactivating and slowly deactivation outwards potassium current at depolarizating voltages from -30 mV to +50mV. Shows no obvious change in the activation rate from different holding potentials. Activation is strongly dependent on the pH of the external solution. In Mus musculus (Mouse), this protein is Voltage-gated delayed rectifier potassium channel KCNH8.